The following is a 318-amino-acid chain: Protoheme IX farnesyltransferase (318 aa).

The next 9 helical transmembrane spans lie at 29 to 49 (IIPL…QGQV), 51 to 71 (PVLL…AQTI), 102 to 122 (LIFA…FANL), 123 to 143 (LAAS…THWL), 151 to 171 (IVIG…AVTG), 179 to 199 (LIFA…ALMI), 219 to 239 (ATVK…LLLV), 241 to 261 (PLHA…AVFI), and 280 to 300 (LFLY…VDSL).

This sequence belongs to the UbiA prenyltransferase family. Protoheme IX farnesyltransferase subfamily.

It localises to the cell inner membrane. It carries out the reaction heme b + (2E,6E)-farnesyl diphosphate + H2O = Fe(II)-heme o + diphosphate. The protein operates within porphyrin-containing compound metabolism; heme O biosynthesis; heme O from protoheme: step 1/1. In terms of biological role, converts heme B (protoheme IX) to heme O by substitution of the vinyl group on carbon 2 of heme B porphyrin ring with a hydroxyethyl farnesyl side group. The polypeptide is Protoheme IX farnesyltransferase (Nostoc sp. (strain PCC 7120 / SAG 25.82 / UTEX 2576)).